The chain runs to 584 residues: Delta 8-(E)-sphingolipid desaturase (584 aa).

The region spanning 7-82 (KKIFTRSQII…FTRFKIGEIE (76 aa)) is the Cytochrome b5 heme-binding domain. Residues His42 and His65 each coordinate heme. The tract at residues 109–134 (NKNTSNKKTLDSKLDNDSSNSTSDLE) is disordered. A helical membrane pass occupies residues 261–281 (LFLYSLSFLKINQLFLSAVFM). A Histidine box-1 motif is present at residues 293–297 (HDAGH). A helical membrane pass occupies residues 306 to 326 (IDNIFGMLIADWFGGLSLGWW). A Histidine box-2 motif is present at residues 330–334 (HNVHH). A run of 3 helical transmembrane segments spans residues 386–403 (YLYY…YRLS), 423–443 (YFEF…LVFK), and 455–475 (VMVS…SHFA). Positions 514–518 (QAIHH) match the Histidine box-3 motif.

The protein belongs to the fatty acid desaturase type 1 family.

It is found in the membrane. It carries out the reaction an N-acylsphing-4-enine + 2 Fe(II)-[cytochrome b5] + O2 + 2 H(+) = a (4E,8E)-4-sphinga-4,8-dienine ceramide + 2 Fe(III)-[cytochrome b5] + 2 H2O. It functions in the pathway lipid metabolism; sphingolipid metabolism. Functionally, delta(8)-fatty-acid desaturase which introduces a double bond at the 8-position in the long-chain base (LCB) of ceramides. Required for the formation of the di-unsaturated sphingoid base (E,E)-sphinga-4,8-dienine during glucosylceramide (GluCer) biosynthesis. This is Delta 8-(E)-sphingolipid desaturase from Candida albicans (strain SC5314 / ATCC MYA-2876) (Yeast).